A 186-amino-acid polypeptide reads, in one-letter code: Ribosome-recycling factor (186 aa).

The protein belongs to the RRF family.

The protein resides in the cytoplasm. Responsible for the release of ribosomes from messenger RNA at the termination of protein biosynthesis. May increase the efficiency of translation by recycling ribosomes from one round of translation to another. The sequence is that of Ribosome-recycling factor from Chlorobium limicola (strain DSM 245 / NBRC 103803 / 6330).